Reading from the N-terminus, the 643-residue chain is uncharacterized protein (643 aa).

Residues 561–643 are disordered; the sequence is LNQELETSSE…GADRKKRGVY (83 aa). The segment covering 591–606 has biased composition (gly residues); the sequence is SRGGRGGRGARGGNRG. Positions 617–635 are enriched in basic and acidic residues; the sequence is GHDRQMKEKHKSDIKQRGA.

This is an uncharacterized protein from Caenorhabditis elegans.